The chain runs to 183 residues: UPF0397 protein EF_2154 (183 aa).

A run of 5 helical transmembrane segments spans residues 10-30 (IVAI…VVIP), 44-64 (FLAL…GLIG), 74-94 (GSAW…FGFA), 115-135 (IFQA…LDIL), and 147-167 (QGVF…TLLM).

The protein belongs to the UPF0397 family.

The protein resides in the cell membrane. The sequence is that of UPF0397 protein EF_2154 from Enterococcus faecalis (strain ATCC 700802 / V583).